The following is a 259-amino-acid chain: Polycomb group RING finger protein 1 (259 aa).

At A2 the chain carries N-acetylalanine. Phosphoserine is present on S3. K24 participates in a covalent cross-link: Glycyl lysine isopeptide (Lys-Gly) (interchain with G-Cter in SUMO2). The RING-type zinc finger occupies 47–86 (CCLCAGYFVDATTITECLHTFCKSCIVKYLQTSKYCPMCN). Residues 86–247 (NIKIHETQPL…LSHWFGKPSP (162 aa)) form a necessary for repressor activity region. K88 participates in a covalent cross-link: Glycyl lysine isopeptide (Lys-Gly) (interchain with G-Cter in SUMO2). The segment at 150–255 (LPFSSFDHSK…SPLLLQYSVK (106 aa)) is required for the interaction with the KDM2B-SKP1 heterodimeric complex. The interval 167-255 (EQLSLCLERL…SPLLLQYSVK (89 aa)) is RING-finger and WD40-associated ubiquitin-like domain (RAWUL); sufficient for interaction with BCOR and BCORL1.

In terms of assembly, interacts with BCORL1, forming heterodimers. The PCGF1-BCORL1 heterodimeric complex interacts with the KDM2B-SKP1 heterodimeric complex to form a homotetrameric polycomb repression complex 1 (PRC1.1). Component of the repressive BCOR complex containing a Polycomb group subcomplex at least composed of RYBP, RING1 and RNF2/RING2. Specifically interacts with BCOR, RING1 and RNF2/RING2. Component of a PRC1-like complex. Interacts with CBX6, CBX7 and CBX8. Interacts with DPPA4, NANOG, POU5F1 and RYBP.

The protein resides in the nucleus. Component of the Polycomb group (PcG) multiprotein BCOR complex, a complex required to maintain the transcriptionally repressive state of some genes, such as BCL6 and the cyclin-dependent kinase inhibitor, CDKN1A. Transcriptional repressor that may be targeted to the DNA by BCL6; this transcription repressor activity may be related to PKC signaling pathway. Represses CDKN1A expression by binding to its promoter, and this repression is dependent on the retinoic acid response element (RARE element). Promotes cell cycle progression and enhances cell proliferation as well. May have a positive role in tumor cell growth by down-regulating CDKN1A. Component of a Polycomb group (PcG) multiprotein PRC1-like complex, a complex class required to maintain the transcriptionally repressive state of many genes, including Hox genes, throughout development. PcG PRC1 complex acts via chromatin remodeling and modification of histones; it mediates monoubiquitination of histone H2A 'Lys-119', rendering chromatin heritably changed in its expressibility. Within the PRC1-like complex, regulates RNF2 ubiquitin ligase activity. Regulates the expression of DPPA4 and NANOG in the NT2 embryonic carcinoma cells. This chain is Polycomb group RING finger protein 1 (PCGF1), found in Bos taurus (Bovine).